Reading from the N-terminus, the 85-residue chain is Electron transfer flavoprotein regulatory factor 1 homolog (85 aa).

The protein belongs to the complex I LYR family. Highly expressed in the larval fat body.

It is found in the mitochondrion. In terms of biological role, acts as a regulator of the electron transfer flavoprotein by promoting the removal of flavin from the ETF holoenzyme. May act with the ETF complex to coordinate lipid homeostasis in the fat body in response to stage-specific demands. The sequence is that of Electron transfer flavoprotein regulatory factor 1 homolog from Drosophila melanogaster (Fruit fly).